The following is a 73-amino-acid chain: Large ribosomal subunit protein bL31 (73 aa).

It belongs to the bacterial ribosomal protein bL31 family. Type A subfamily. Part of the 50S ribosomal subunit.

In terms of biological role, binds the 23S rRNA. This Allorhizobium ampelinum (strain ATCC BAA-846 / DSM 112012 / S4) (Agrobacterium vitis (strain S4)) protein is Large ribosomal subunit protein bL31.